We begin with the raw amino-acid sequence, 158 residues long: Small ribosomal subunit protein uS17 (158 aa).

Residue A2 is modified to N-acetylalanine. Residue R22 is modified to Citrulline. N6-acetyllysine is present on residues K38, K45, and K58. A lipid anchor (S-palmitoyl cysteine) is attached at C60. At S67 the chain carries Phosphoserine. R69 carries the omega-N-methylarginine modification. Position 110 is a phosphoserine (S110).

This sequence belongs to the universal ribosomal protein uS17 family. Component of the small ribosomal subunit. Part of the small subunit (SSU) processome, composed of more than 70 proteins and the RNA chaperone small nucleolar RNA (snoRNA) U3. Post-translationally, citrullinated by PADI4.

The protein resides in the cytoplasm. The protein localises to the nucleus. It is found in the nucleolus. Component of the small ribosomal subunit. The ribosome is a large ribonucleoprotein complex responsible for the synthesis of proteins in the cell. Part of the small subunit (SSU) processome, first precursor of the small eukaryotic ribosomal subunit. During the assembly of the SSU processome in the nucleolus, many ribosome biogenesis factors, an RNA chaperone and ribosomal proteins associate with the nascent pre-rRNA and work in concert to generate RNA folding, modifications, rearrangements and cleavage as well as targeted degradation of pre-ribosomal RNA by the RNA exosome. The sequence is that of Small ribosomal subunit protein uS17 (RPS11) from Canis lupus familiaris (Dog).